The primary structure comprises 326 residues: Phosphatidylinositol:ceramide inositolphosphotransferase (326 aa).

The next 6 helical transmembrane spans lie at leucine 33 to tyrosine 53, serine 82 to histidine 102, valine 115 to leucine 135, valine 169 to valine 189, arginine 199 to serine 219, and histidine 222 to aspartate 242. The active site involves histidine 181. Catalysis depends on residues histidine 222 and aspartate 226. Positions methionine 306–threonine 326 are disordered. Residues histidine 316–threonine 326 show a composition bias toward polar residues.

Belongs to the sphingomyelin synthase family.

The protein resides in the golgi apparatus. It localises to the trans-Golgi network membrane. Functionally, catalyzes the transfer of the phosphorylinositol group from phosphatidylinositol (PI) to phytoceramide, an essential step in sphingolipid biosynthesis. May play an important role in modulating plant programmed cell death (PCD) associated with defense (e.g. toward Golovinomyces cichoracearum) by promoting sphingolipid metabolism and regulating ceramide accumulation. This chain is Phosphatidylinositol:ceramide inositolphosphotransferase (ERH1), found in Oryza sativa subsp. indica (Rice).